The following is a 164-amino-acid chain: MTVRLIVKYPDPRLRAAAEPVTTFDEGLRKLADDLLDTMRAAPGIGITAPHIGISKRVVVLELDRAAGPKIYINPEIVWACEEKIRHQEGSVSMPGVVDEVERHARIRLRYQDLDGNEQTEESDGLLAVCHQHEIDQLDGIFWVQRLSRLRRERLIKRYEKLQR.

Glutamate 134 is an active-site residue.

This sequence belongs to the polypeptide deformylase family.

The sequence is that of Peptide deformylase-like from Brucella melitensis biotype 1 (strain ATCC 23456 / CCUG 17765 / NCTC 10094 / 16M).